We begin with the raw amino-acid sequence, 937 residues long: Translation initiation factor IF-2 (937 aa).

The disordered stretch occupies residues 47 to 352 (RAAFQTKATP…EMPQRKERPL (306 aa)). Residues 52 to 68 (TKATPAASKPATPAAPK) are compositionally biased toward low complexity. Over residues 97–116 (QHSNNRPQANANRNGQASNG) the composition is skewed to polar residues. Residues 117 to 153 (QNRTNNARPNNNSARPNNSRPNTNSRPNNNSQNRSTS) are compositionally biased toward low complexity. Residues 154–169 (ANHPMSLQEQISQANA) show a composition bias toward polar residues. Residues 173–197 (RTQERIQQQREQREADEKKRREQAN) are compositionally biased toward basic and acidic residues. Over residues 202–229 (TRNNASNNRPSNGKPTNGARPTTNSPRP) the composition is skewed to polar residues. Residues 240 to 269 (SSRPNNNNSARPNTTNNRPTNSRPATTPSR) are compositionally biased toward low complexity. Polar residues predominate over residues 274–298 (QEMQQKMQANTVSASKPASNNTASK). Residues 322-331 (FNKKRKKTRK) show a composition bias toward basic residues. Residues 339–352 (AAKKEMPQRKERPL) show a composition bias toward basic and acidic residues. The 170-residue stretch at 438-607 (SRPPVVTIMG…LLEADVLELK (170 aa)) folds into the tr-type G domain. Residues 447–454 (GHVDHGKT) form a G1 region. 447–454 (GHVDHGKT) contributes to the GTP binding site. The tract at residues 472-476 (GITQH) is G2. The segment at 493-496 (DTPG) is G3. GTP contacts are provided by residues 493 to 497 (DTPGH) and 547 to 550 (NKID). Residues 547–550 (NKID) form a G4 region. The G5 stretch occupies residues 583-585 (SAK).

It belongs to the TRAFAC class translation factor GTPase superfamily. Classic translation factor GTPase family. IF-2 subfamily.

It is found in the cytoplasm. In terms of biological role, one of the essential components for the initiation of protein synthesis. Protects formylmethionyl-tRNA from spontaneous hydrolysis and promotes its binding to the 30S ribosomal subunits. Also involved in the hydrolysis of GTP during the formation of the 70S ribosomal complex. This chain is Translation initiation factor IF-2, found in Latilactobacillus sakei subsp. sakei (strain 23K) (Lactobacillus sakei subsp. sakei).